The chain runs to 274 residues: GPN-loop GTPase 3 (274 aa).

Position 13-18 (13-18) interacts with GTP; it reads GVGKST. A Gly-Pro-Asn (GPN)-loop; involved in dimer interface motif is present at residues 70–72; that stretch reads GPN. 173-176 lines the GTP pocket; that stretch reads SKID. Positions 255-274 are disordered; it reads SESQEPKEPVEEIEEEVDFE. A compositionally biased stretch (acidic residues) spans 265–274; that stretch reads EEIEEEVDFE.

It belongs to the GPN-loop GTPase family. In terms of assembly, heterodimers with GPN1 or GPN2. Binds to RNA polymerase II (RNAPII).

Its function is as follows. Small GTPase required for proper nuclear import of RNA polymerase II and III (RNAPII and RNAPIII). May act at an RNAP assembly step prior to nuclear import. In Debaryomyces hansenii (strain ATCC 36239 / CBS 767 / BCRC 21394 / JCM 1990 / NBRC 0083 / IGC 2968) (Yeast), this protein is GPN-loop GTPase 3.